We begin with the raw amino-acid sequence, 591 residues long: MTRDLEKLVAQTILQGFDAQYGRFLEVTAGAQQRFEQADWPAVQQAMKQRIHLYDHHVGLVVAQLRCITGIRCDDADFLARMKHIYTGLLPDYPRFEIAESFFNSVYCRLFNHRELAPDKLFVFSSQPEKRFHEIPRPIAKTFVPTDGWQRMLEKLLGDVPLRLPWEDLPRDIDYIVTYLQSTFSAEQLEQATLQVANELFYRNKAAWLAGKLSLPDGVFPFLLPIHHNERGALFIDTCLTAQADASMVFGFARSYFMVYAPQPSALVAWLRDILPGKTTAELYLAIGCQKHSKTEYYREYLHYIAESEEQFIIAPGVKGMVMLVFTLPSFDRVFKVIKDRFAPQKEVSAERVMACYQLVKEHDRVGRMADTQEYENFVIDKHRISPELLDELWREVPEKLEDLGDQLVIRHLYMERRMTPLNLYLEQANAQQLHDVIEEYGNAIKQLAAANIFPGDMLFKNFGVTRHGRVVFYDYDEICYMTEVNFRKIPPPRYLEDELAAEPWYSVAPNDVFPEEFPHFLCSDRHIRTLFEEMHGDLFCADYWRALQQRIREGHIEDVYAYRRRKRFSQRAEPLYITTENDSGLCRYPA.

ATP is bound by residues 315-321 and Lys336; that span reads APGVKGM. The active site involves Asp371.

The protein belongs to the AceK family.

It is found in the cytoplasm. The enzyme catalyses L-seryl-[isocitrate dehydrogenase] + ATP = O-phospho-L-seryl-[isocitrate dehydrogenase] + ADP + H(+). In terms of biological role, bifunctional enzyme which can phosphorylate or dephosphorylate isocitrate dehydrogenase (IDH) on a specific serine residue. This is a regulatory mechanism which enables bacteria to bypass the Krebs cycle via the glyoxylate shunt in response to the source of carbon. When bacteria are grown on glucose, IDH is fully active and unphosphorylated, but when grown on acetate or ethanol, the activity of IDH declines drastically concomitant with its phosphorylation. The sequence is that of Isocitrate dehydrogenase kinase/phosphatase from Pectobacterium atrosepticum (strain SCRI 1043 / ATCC BAA-672) (Erwinia carotovora subsp. atroseptica).